Here is a 400-residue protein sequence, read N- to C-terminus: Enoyl-[acyl-carrier-protein] reductase [NADH] (400 aa).

NAD(+)-binding positions include 48–53, 74–75, 111–112, and 139–140; these read GASTGY, FE, DA, and LA. A substrate-binding site is contributed by tyrosine 225. Catalysis depends on tyrosine 235, which acts as the Proton donor. NAD(+) is bound by residues lysine 244 and 273–275; that span reads VVT.

Belongs to the TER reductase family. As to quaternary structure, monomer.

It catalyses the reaction a 2,3-saturated acyl-[ACP] + NAD(+) = a (2E)-enoyl-[ACP] + NADH + H(+). The protein operates within lipid metabolism; fatty acid biosynthesis. In terms of biological role, involved in the final reduction of the elongation cycle of fatty acid synthesis (FAS II). Catalyzes the reduction of a carbon-carbon double bond in an enoyl moiety that is covalently linked to an acyl carrier protein (ACP). The polypeptide is Enoyl-[acyl-carrier-protein] reductase [NADH] (Burkholderia cenocepacia (strain HI2424)).